The primary structure comprises 361 residues: Dynein axonemal assembly factor 8 (361 aa).

2 disordered regions span residues 65 to 191 and 309 to 334; these read DPAG…ERRK and AQPG…RRPL. Polar residues predominate over residues 136–157; sequence TLNTSASQSPRQGPQGEATRSP. Ser-142 and Ser-144 each carry phosphoserine. Residues 321 to 334 are compositionally biased toward low complexity; it reads GSSSSSGHLGRRPL.

The protein resides in the dynein axonemal particle. The protein localises to the cytoplasm. In cyliated cells, dynein axonemal particle-specific protein required for deployment of ODA to the axoneme. Interacts with outer dynein arm (ODA) subunits. The protein is Dynein axonemal assembly factor 8 (DNAAF8) of Bos taurus (Bovine).